Here is a 152-residue protein sequence, read N- to C-terminus: Transcriptional regulator MraZ (152 aa).

SpoVT-AbrB domains lie at 5-52 (ATLV…PLPE) and 81-124 (ASEC…DEQT).

This sequence belongs to the MraZ family. As to quaternary structure, forms oligomers.

Its subcellular location is the cytoplasm. The protein localises to the nucleoid. Negatively regulates its own expression and that of the subsequent genes in the proximal part of the division and cell wall (dcw) gene cluster. Acts by binding directly to DNA. May also regulate the expression of genes outside the dcw cluster. This is Transcriptional regulator MraZ from Pectobacterium carotovorum subsp. carotovorum (strain PC1).